The following is a 110-amino-acid chain: Subtilisin inhibitor-like protein 1 (110 aa).

2 cysteine pairs are disulfide-bonded: Cys-30–Cys-44 and Cys-68–Cys-98.

Belongs to the protease inhibitor I16 (SSI) family. In terms of assembly, homodimer.

The protein localises to the secreted. In terms of biological role, strong inhibitor of subtilisin BPN'. This is Subtilisin inhibitor-like protein 1 from Streptomyces cacaoi.